A 334-amino-acid polypeptide reads, in one-letter code: 4-hydroxy-3-methylbut-2-enyl diphosphate reductase (334 aa).

Cys-19 serves as a coordination point for [4Fe-4S] cluster. (2E)-4-hydroxy-3-methylbut-2-enyl diphosphate is bound by residues His-48 and His-84. Dimethylallyl diphosphate contacts are provided by His-48 and His-84. Isopentenyl diphosphate-binding residues include His-48 and His-84. Residue Cys-106 coordinates [4Fe-4S] cluster. His-134 lines the (2E)-4-hydroxy-3-methylbut-2-enyl diphosphate pocket. His-134 provides a ligand contact to dimethylallyl diphosphate. Residue His-134 participates in isopentenyl diphosphate binding. Glu-136 (proton donor) is an active-site residue. Residue Thr-175 coordinates (2E)-4-hydroxy-3-methylbut-2-enyl diphosphate. A [4Fe-4S] cluster-binding site is contributed by Cys-205. Ser-233, Ser-234, Asn-235, and Ser-278 together coordinate (2E)-4-hydroxy-3-methylbut-2-enyl diphosphate. Positions 233, 234, 235, and 278 each coordinate dimethylallyl diphosphate. Isopentenyl diphosphate contacts are provided by Ser-233, Ser-234, Asn-235, and Ser-278.

The protein belongs to the IspH family. [4Fe-4S] cluster is required as a cofactor.

It catalyses the reaction isopentenyl diphosphate + 2 oxidized [2Fe-2S]-[ferredoxin] + H2O = (2E)-4-hydroxy-3-methylbut-2-enyl diphosphate + 2 reduced [2Fe-2S]-[ferredoxin] + 2 H(+). The catalysed reaction is dimethylallyl diphosphate + 2 oxidized [2Fe-2S]-[ferredoxin] + H2O = (2E)-4-hydroxy-3-methylbut-2-enyl diphosphate + 2 reduced [2Fe-2S]-[ferredoxin] + 2 H(+). It functions in the pathway isoprenoid biosynthesis; dimethylallyl diphosphate biosynthesis; dimethylallyl diphosphate from (2E)-4-hydroxy-3-methylbutenyl diphosphate: step 1/1. It participates in isoprenoid biosynthesis; isopentenyl diphosphate biosynthesis via DXP pathway; isopentenyl diphosphate from 1-deoxy-D-xylulose 5-phosphate: step 6/6. Its function is as follows. Catalyzes the conversion of 1-hydroxy-2-methyl-2-(E)-butenyl 4-diphosphate (HMBPP) into a mixture of isopentenyl diphosphate (IPP) and dimethylallyl diphosphate (DMAPP). Acts in the terminal step of the DOXP/MEP pathway for isoprenoid precursor biosynthesis. The protein is 4-hydroxy-3-methylbut-2-enyl diphosphate reductase of Chelativorans sp. (strain BNC1).